The following is a 400-amino-acid chain: Putative cytochrome P450 141 (400 aa).

Transmembrane regions (helical) follow at residues 225–245 (VVGM…AVIT) and 294–314 (VVIA…ITSA). C346 serves as a coordination point for heme.

It belongs to the cytochrome P450 family. Requires heme as cofactor.

The protein resides in the cell membrane. In Mycobacterium tuberculosis (strain CDC 1551 / Oshkosh), this protein is Putative cytochrome P450 141 (cyp141).